Reading from the N-terminus, the 100-residue chain is Putative protein adenylyltransferase MJ1379 (100 aa).

The GSX(10)DXD motif motif lies at glycine 31 to aspartate 45. Aspartate 43, aspartate 45, and aspartate 77 together coordinate Mg(2+).

The protein belongs to the MntA antitoxin family. As to quaternary structure, probably forms a complex with cognate toxin MJ1380. Mg(2+) serves as cofactor.

It catalyses the reaction L-tyrosyl-[protein] + ATP = O-(5'-adenylyl)-L-tyrosyl-[protein] + diphosphate. The catalysed reaction is O-(5'-adenylyl)-L-tyrosyl-[protein] + ATP = O-[5'-(adenylyl-(5'-&gt;3')-adenylyl)]-L-tyrosyl-[protein] + diphosphate. Functionally, probable antitoxin component of a putative type VII toxin-antitoxin (TA) system. Neutralizes cognate toxic MJ1380 by di-AMPylation. In Methanocaldococcus jannaschii (strain ATCC 43067 / DSM 2661 / JAL-1 / JCM 10045 / NBRC 100440) (Methanococcus jannaschii), this protein is Putative protein adenylyltransferase MJ1379.